The primary structure comprises 283 residues: Polyamine aminopropyltransferase (283 aa).

The region spanning 2–237 (ELWYTEEHTD…GHWLFGFASK (236 aa)) is the PABS domain. Gln-31 lines the S-methyl-5'-thioadenosine pocket. Positions 62 and 86 each coordinate spermidine. Residues Glu-106 and 137 to 138 (DG) each bind S-methyl-5'-thioadenosine. Asp-155 serves as the catalytic Proton acceptor. 155-158 (DSTD) contributes to the spermidine binding site. An S-methyl-5'-thioadenosine-binding site is contributed by Pro-162.

It belongs to the spermidine/spermine synthase family. As to quaternary structure, homodimer or homotetramer.

It is found in the cytoplasm. The catalysed reaction is S-adenosyl 3-(methylsulfanyl)propylamine + putrescine = S-methyl-5'-thioadenosine + spermidine + H(+). It participates in amine and polyamine biosynthesis; spermidine biosynthesis; spermidine from putrescine: step 1/1. In terms of biological role, catalyzes the irreversible transfer of a propylamine group from the amino donor S-adenosylmethioninamine (decarboxy-AdoMet) to putrescine (1,4-diaminobutane) to yield spermidine. This is Polyamine aminopropyltransferase from Clostridium perfringens (strain SM101 / Type A).